The chain runs to 323 residues: Cytoskeleton protein RodZ (323 aa).

Residues 1 to 111 lie on the Cytoplasmic side of the membrane; it reads MNTEASQDKT…LGKRRKKRDG (111 aa). One can recognise an HTH cro/C1-type domain in the interval 19 to 71; sequence LRQAREQLGLSQQAVAERLCLKMSTVRDIEEDNLSADLASTFVRGYIRSYAKL. Residues 30–49 constitute a DNA-binding region (H-T-H motif); that stretch reads QQAVAERLCLKMSTVRDIEE. The chain crosses the membrane as a helical; Signal-anchor for type II membrane protein span at residues 112-132; sequence WLMSFTWLIVFVVVGLTGAWW. The Periplasmic segment spans residues 133–323; that stretch reads WQNHKAQQEE…RVARLTVAAQ (191 aa). 2 stretches are compositionally biased toward polar residues: residues 149–172 and 179–214; these read QSSAQLSQNNEGQSVPLTDSNADN and NGSTPVDTGVAPQQSQTPAVSGSATAQQPAVVSPSQ. The tract at residues 149–236 is disordered; the sequence is QSSAQLSQNN…APLPTADAGV (88 aa). Residues 215 to 234 show a composition bias toward low complexity; the sequence is TTLPETTPAAPTAPLPTADA.

The protein belongs to the RodZ family.

The protein localises to the cell inner membrane. Its function is as follows. Cytoskeletal protein that is involved in cell-shape control through regulation of the length of the long axis. The protein is Cytoskeleton protein RodZ of Serratia proteamaculans (strain 568).